The chain runs to 58 residues: Pepsin-1 (58 aa).

Residues 1–41 (LLQVPLEKGQSAREYLQEQGLWEQYRLKYPYNPMAKFDPSF) constitute a propeptide, activation peptide.

Belongs to the peptidase A1 family.

This chain is Pepsin-1, found in Thunnus orientalis (North Pacific bluefin tuna).